Here is a 96-residue protein sequence, read N- to C-terminus: ESAT-6-like protein SAG0230 (96 aa).

The protein belongs to the WXG100 family. sagEsxA-like subfamily. In terms of assembly, homodimer.

The chain is ESAT-6-like protein SAG0230 from Streptococcus agalactiae serotype V (strain ATCC BAA-611 / 2603 V/R).